The following is a 280-amino-acid chain: 1-cyclohexenylcarbonyl-CoA reductase (280 aa).

NADP(+) contacts are provided by residues 22-25 (SRGI), 71-72 (DV), and asparagine 98. Residues tyrosine 158 and lysine 165 each act as proton acceptor in the active site. Residues lysine 165 and 194–196 (IDS) each bind NADP(+).

Belongs to the short-chain dehydrogenases/reductases (SDR) family. Homodimer.

The enzyme catalyses (4R,5R)-4,5-dihydroxycyclohex-2-ene-1-carbonyl-CoA + NADP(+) = (3R,4R)-3,4-dihydroxycyclohexa-1,5-diene-1-carbonyl-CoA + NADPH + H(+). It carries out the reaction (3S)-3-hydroxycyclohexane-1-carbonyl-CoA + NADP(+) = (5S)-5-hydroxycyclohex-1-ene-1-carbonyl-CoA + NADPH + H(+). The catalysed reaction is cyclohexane-1-carbonyl-CoA + NADP(+) = cyclohex-1-ene-1-carbonyl-CoA + NADPH + H(+). It functions in the pathway antibiotic biosynthesis. Its activity is regulated as follows. Inhibited by the thiol inhibitors p-chloromercuribenzoate, N-ethylmaleimide and iodoacetamide. Also inhibited by various divalent cations. In terms of biological role, involved in the biosynthesis of the antifungal antibiotic ansatrienin A (mycotrienin I). Catalyzes three of the reductive steps involved in the formation of the cyclohexanecarboxylic acid (CHC) moiety of ansatrienin from shikimic acid. Can use 3,4-dihydroxycyclohexa-1,5-diene-1-carbonyl-CoA, 5-hydroxycyclohex-1-ene-1-carbonyl-CoA and cyclohex-1-ene-1-carbonyl-CoA as substrates. This Streptomyces collinus protein is 1-cyclohexenylcarbonyl-CoA reductase.